The following is a 235-amino-acid chain: 2-C-methyl-D-erythritol 4-phosphate cytidylyltransferase (235 aa).

The protein belongs to the IspD/TarI cytidylyltransferase family. IspD subfamily.

It carries out the reaction 2-C-methyl-D-erythritol 4-phosphate + CTP + H(+) = 4-CDP-2-C-methyl-D-erythritol + diphosphate. It participates in isoprenoid biosynthesis; isopentenyl diphosphate biosynthesis via DXP pathway; isopentenyl diphosphate from 1-deoxy-D-xylulose 5-phosphate: step 2/6. Catalyzes the formation of 4-diphosphocytidyl-2-C-methyl-D-erythritol from CTP and 2-C-methyl-D-erythritol 4-phosphate (MEP). The chain is 2-C-methyl-D-erythritol 4-phosphate cytidylyltransferase from Pseudomonas putida (strain GB-1).